A 102-amino-acid polypeptide reads, in one-letter code: PqqA binding protein (102 aa).

This sequence belongs to the PqqD family. In terms of assembly, monomer. Interacts with PqqE.

The protein operates within cofactor biosynthesis; pyrroloquinoline quinone biosynthesis. Functionally, functions as a PqqA binding protein and presents PqqA to PqqE, in the pyrroloquinoline quinone (PQQ) biosynthetic pathway. The protein is PqqA binding protein of Rhodopseudomonas palustris (strain TIE-1).